A 138-amino-acid polypeptide reads, in one-letter code: Phospholipase A2 homolog 1 (138 aa).

An N-terminal signal peptide occupies residues 1–16 (MRTLWIMAVLLVGVEG). 7 disulfides stabilise this stretch: Cys-42–Cys-132, Cys-44–Cys-60, Cys-59–Cys-111, Cys-65–Cys-138, Cys-66–Cys-104, Cys-73–Cys-97, and Cys-91–Cys-102. An important for membrane-damaging activities in eukaryotes and bacteria; heparin-binding region spans residues 121 to 134 (KKYKNNYLKPFCKK).

It belongs to the phospholipase A2 family. Group II subfamily. K49 sub-subfamily. In terms of assembly, homodimer; non-covalently linked (probable alternative/compact dimer conformation in solution). In terms of tissue distribution, expressed by the venom gland.

It localises to the secreted. Functionally, snake venom phospholipase A2 homolog that lacks enzymatic and anticoagulant activities. In mice, it induces conspicuous local myonecrosis, edema, and a systemic interleukin-6 response. In vitro, it is cytolytic upon myoblasts, and weakly bactericidal. A model of myotoxic mechanism has been proposed: an apo Lys49-PLA2 is activated by the entrance of a hydrophobic molecule (e.g. fatty acid) at the hydrophobic channel of the protein leading to a reorientation of a monomer. This reorientation causes a transition between 'inactive' to 'active' states, causing alignment of C-terminal and membrane-docking sites (MDoS) side-by-side and putting the membrane-disruption sites (MDiS) in the same plane, exposed to solvent and in a symmetric position for both monomers. The MDoS region stabilizes the toxin on membrane by the interaction of charged residues with phospholipid head groups. Subsequently, the MDiS region destabilizes the membrane with penetration of hydrophobic residues. This insertion causes a disorganization of the membrane, allowing an uncontrolled influx of ions (i.e. calcium and sodium), and eventually triggering irreversible intracellular alterations and cell death. This is Phospholipase A2 homolog 1 from Bothrops atrox (Barba amarilla).